Here is a 169-residue protein sequence, read N- to C-terminus: Small ribosomal subunit protein uS5 (169 aa).

Residues 15 to 79 form the S5 DRBM domain; that stretch reads LKDQVVAINR…ESAKKNLVKV (65 aa).

It belongs to the universal ribosomal protein uS5 family. Part of the 30S ribosomal subunit. Contacts proteins S4 and S8.

In terms of biological role, with S4 and S12 plays an important role in translational accuracy. Located at the back of the 30S subunit body where it stabilizes the conformation of the head with respect to the body. This is Small ribosomal subunit protein uS5 from Koribacter versatilis (strain Ellin345).